A 452-amino-acid chain; its full sequence is Cytoplasmic tRNA 2-thiolation protein 2 (452 aa).

Belongs to the CTU2/NCS2 family.

Its subcellular location is the cytoplasm. Its pathway is tRNA modification; 5-methoxycarbonylmethyl-2-thiouridine-tRNA biosynthesis. Its function is as follows. Plays a central role in 2-thiolation of mcm(5)S(2)U at tRNA wobble positions of tRNA(Lys), tRNA(Glu) and tRNA(Gln). May act by forming a heterodimer with NCS6 that ligates sulfur from thiocarboxylated URM1 onto the uridine of tRNAs at wobble position. Prior mcm(5) tRNA modification by the elongator complex is required for 2-thiolation. May also be involved in protein urmylation. The protein is Cytoplasmic tRNA 2-thiolation protein 2 of Candida albicans (strain SC5314 / ATCC MYA-2876) (Yeast).